Here is a 672-residue protein sequence, read N- to C-terminus: Transketolase (672 aa).

Position 35 (histidine 35) interacts with substrate. Residues histidine 75 and 124–126 (GPL) contribute to the thiamine diphosphate site. Position 162 (aspartate 162) interacts with Mg(2+). Thiamine diphosphate is bound by residues glycine 163 and asparagine 192. Mg(2+) contacts are provided by asparagine 192 and isoleucine 194. Substrate-binding residues include histidine 266, arginine 361, and serine 388. Histidine 266 provides a ligand contact to thiamine diphosphate. The active-site Proton donor is glutamate 415. Phenylalanine 441 contributes to the thiamine diphosphate binding site. Residues histidine 465, aspartate 473, and arginine 524 each contribute to the substrate site.

This sequence belongs to the transketolase family. In terms of assembly, homodimer. Mg(2+) is required as a cofactor. Requires Ca(2+) as cofactor. It depends on Mn(2+) as a cofactor. The cofactor is Co(2+). Thiamine diphosphate serves as cofactor.

The catalysed reaction is D-sedoheptulose 7-phosphate + D-glyceraldehyde 3-phosphate = aldehydo-D-ribose 5-phosphate + D-xylulose 5-phosphate. Its pathway is carbohydrate biosynthesis; Calvin cycle. It participates in carbohydrate degradation; pentose phosphate pathway. In terms of biological role, catalyzes the transfer of a two-carbon ketol group from a ketose donor to an aldose acceptor, via a covalent intermediate with the cofactor thiamine pyrophosphate. In Rhodobacter capsulatus (strain ATCC BAA-309 / NBRC 16581 / SB1003), this protein is Transketolase (tktA).